The primary structure comprises 185 residues: Ribosome-recycling factor (185 aa).

Belongs to the RRF family.

The protein localises to the cytoplasm. Responsible for the release of ribosomes from messenger RNA at the termination of protein biosynthesis. May increase the efficiency of translation by recycling ribosomes from one round of translation to another. This Campylobacter fetus subsp. fetus (strain 82-40) protein is Ribosome-recycling factor.